A 211-amino-acid polypeptide reads, in one-letter code: Large ribosomal subunit protein uL4 (211 aa).

The segment at 40–85 (QQAHSRQGTASTLTRSEVRGGGRKPYKQKGTGRARQGSIRTPLRPG) is disordered. Residues 41–54 (QAHSRQGTASTLTR) show a composition bias toward polar residues. Over residues 60–71 (GGRKPYKQKGTG) the composition is skewed to basic residues.

It belongs to the universal ribosomal protein uL4 family. Part of the 50S ribosomal subunit.

One of the primary rRNA binding proteins, this protein initially binds near the 5'-end of the 23S rRNA. It is important during the early stages of 50S assembly. It makes multiple contacts with different domains of the 23S rRNA in the assembled 50S subunit and ribosome. Functionally, forms part of the polypeptide exit tunnel. This is Large ribosomal subunit protein uL4 from Prochlorococcus marinus (strain NATL2A).